Here is a 507-residue protein sequence, read N- to C-terminus: Glutamate--tRNA ligase (507 aa).

Residues P14–G24 carry the 'HIGH' region motif. Positions K262–R266 match the 'KMSKS' region motif. K265 provides a ligand contact to ATP.

The protein belongs to the class-I aminoacyl-tRNA synthetase family. Glutamate--tRNA ligase type 1 subfamily. In terms of assembly, monomer.

It localises to the cytoplasm. The catalysed reaction is tRNA(Glu) + L-glutamate + ATP = L-glutamyl-tRNA(Glu) + AMP + diphosphate. In terms of biological role, catalyzes the attachment of glutamate to tRNA(Glu) in a two-step reaction: glutamate is first activated by ATP to form Glu-AMP and then transferred to the acceptor end of tRNA(Glu). The polypeptide is Glutamate--tRNA ligase (Porphyromonas gingivalis (strain ATCC 33277 / DSM 20709 / CIP 103683 / JCM 12257 / NCTC 11834 / 2561)).